We begin with the raw amino-acid sequence, 372 residues long: Queuine tRNA-ribosyltransferase (372 aa).

D92 (proton acceptor) is an active-site residue. Substrate is bound by residues 92–96, D146, Q188, and G215; that span reads DSGGF. An RNA binding region spans residues 246-252; that stretch reads GIGTLRE. D265 functions as the Nucleophile in the catalytic mechanism. The RNA binding; important for wobble base 34 recognition stretch occupies residues 270-274; that stretch reads TRLGR. Residues C303, C305, C308, and H334 each contribute to the Zn(2+) site.

It belongs to the queuine tRNA-ribosyltransferase family. As to quaternary structure, homodimer. Within each dimer, one monomer is responsible for RNA recognition and catalysis, while the other monomer binds to the replacement base PreQ1. It depends on Zn(2+) as a cofactor.

The enzyme catalyses 7-aminomethyl-7-carbaguanine + guanosine(34) in tRNA = 7-aminomethyl-7-carbaguanosine(34) in tRNA + guanine. The protein operates within tRNA modification; tRNA-queuosine biosynthesis. In terms of biological role, catalyzes the base-exchange of a guanine (G) residue with the queuine precursor 7-aminomethyl-7-deazaguanine (PreQ1) at position 34 (anticodon wobble position) in tRNAs with GU(N) anticodons (tRNA-Asp, -Asn, -His and -Tyr). Catalysis occurs through a double-displacement mechanism. The nucleophile active site attacks the C1' of nucleotide 34 to detach the guanine base from the RNA, forming a covalent enzyme-RNA intermediate. The proton acceptor active site deprotonates the incoming PreQ1, allowing a nucleophilic attack on the C1' of the ribose to form the product. After dissociation, two additional enzymatic reactions on the tRNA convert PreQ1 to queuine (Q), resulting in the hypermodified nucleoside queuosine (7-(((4,5-cis-dihydroxy-2-cyclopenten-1-yl)amino)methyl)-7-deazaguanosine). This chain is Queuine tRNA-ribosyltransferase, found in Synechococcus sp. (strain CC9605).